A 257-amino-acid polypeptide reads, in one-letter code: Imidazole glycerol phosphate synthase subunit HisF (257 aa).

Active-site residues include Asp11 and Asp130.

It belongs to the HisA/HisF family. In terms of assembly, heterodimer of HisH and HisF.

The protein resides in the cytoplasm. It carries out the reaction 5-[(5-phospho-1-deoxy-D-ribulos-1-ylimino)methylamino]-1-(5-phospho-beta-D-ribosyl)imidazole-4-carboxamide + L-glutamine = D-erythro-1-(imidazol-4-yl)glycerol 3-phosphate + 5-amino-1-(5-phospho-beta-D-ribosyl)imidazole-4-carboxamide + L-glutamate + H(+). The protein operates within amino-acid biosynthesis; L-histidine biosynthesis; L-histidine from 5-phospho-alpha-D-ribose 1-diphosphate: step 5/9. In terms of biological role, IGPS catalyzes the conversion of PRFAR and glutamine to IGP, AICAR and glutamate. The HisF subunit catalyzes the cyclization activity that produces IGP and AICAR from PRFAR using the ammonia provided by the HisH subunit. The protein is Imidazole glycerol phosphate synthase subunit HisF of Shewanella baltica (strain OS155 / ATCC BAA-1091).